A 464-amino-acid polypeptide reads, in one-letter code: Uronate isomerase (464 aa).

Belongs to the metallo-dependent hydrolases superfamily. Uronate isomerase family.

The catalysed reaction is D-glucuronate = D-fructuronate. It catalyses the reaction aldehydo-D-galacturonate = keto-D-tagaturonate. The protein operates within carbohydrate metabolism; pentose and glucuronate interconversion. This is Uronate isomerase from Caldicellulosiruptor bescii (strain ATCC BAA-1888 / DSM 6725 / KCTC 15123 / Z-1320) (Anaerocellum thermophilum).